An 888-amino-acid polypeptide reads, in one-letter code: MQAVERRPSLLFDEYQNSVTKPNETKNKEARVLSENDGDVSPSVLKQKEISVDDMDMISLPTEFDRQMVLGSPMFFDLEDEENKIDPLPSVSHHYGNGESDSFVSSYTPSNLKTGEETKDLFINPFELVSQMRKRYIAASKQDGISNIKNDTEKWFLYPKPLPKFWRFEDDKRFQDPSDSDLNDDGDSTGTGAATPHRHGYYYPSYFTDHYYYYTKSGLKGKGNIKVPYTGEYFDLEDYKKQYIYHLSNQENTQNPLSPYSSKEESLEEEFLTDVPTFQEFRDDFAYIIELIQSHKFNEVSRKRLSYLLDKFELFQYLNSKKEILANKNVPYRDFYNSRKVDRDLSLSGCISQRQLSEYIWEKINLEPERIVYQDPETSRKLSLRDIFQFGCSSNDQPIAIGLKLIDDEFLDWYRNIYLIDYHLTPNKVAKLVGKEMRFYLLAKVFLEFDNFIEGEYLAEIFIKYVIHILEKSKYQLAQVSVNFQFYSSGEDWYKKFSQWLLRWKLVSYNIRWNIQIARIFPKLFKENVVSNFQEFLDLIFNPLFTLEKEQLPIDSSVNTDIIGLQFFLSNVCSMDLVIKESDEYYWKEFTDMNCKPKFWTAQGDNPTVAHYMYYIYKSLAKVNFLRSQNLQNTITLRNYCSPLSSRTSQFGVDLYFTDQVESLVCNLLLCNGGLLQVEPLWDTATMIQYLFYLFQIPILAAPLSSVSLLNSQKSTFLKNKNVLLEHDYLKDQETAKINPSRDITVGEQRSYETNPFMKMFKMGLKISLSSKSILYNSSYTLEPLIEEYSVAASIYLLNPTDLCELSRTSVLSSGYEGWYKAHWIGVGVKKAPYFEENVGGIDNWYDTAKDTSIKHNVPMIRRRYRKETLDQEWNFVRDHFGVINSIW.

The disordered stretch occupies residues 1 to 42 (MQAVERRPSLLFDEYQNSVTKPNETKNKEARVLSENDGDVSP). Phosphoserine is present on S9. The span at 23 to 34 (NETKNKEARVLS) shows a compositional bias: basic and acidic residues. S41, S178, and S180 each carry phosphoserine.

This sequence belongs to the metallo-dependent hydrolases superfamily. Adenosine and AMP deaminases family.

This Saccharomyces cerevisiae (strain ATCC 204508 / S288c) (Baker's yeast) protein is Inactive deaminase YJL070C.